The following is an 818-amino-acid chain: Histone H2A deubiquitinase MYSM1 (818 aa).

Residues 107 to 158 (SSPVKWTKEEKNLFEQGLATFGRRWTSIARLIGSRSVLQVKNYARHYFKNKC) enclose the SANT domain. Residues 344–442 (IKPPDQELEI…FGCEQAIYNR (99 aa)) enclose the SWIRM domain. An MPN domain is found at 548-680 (VKVSCEAMLV…PHPQSQVACL (133 aa)). Zn(2+) contacts are provided by His-627, His-629, and Asp-640. A JAMM motif motif is present at residues 627–640 (HSHPAFDPNPSIRD). The LXXLL motif motif lies at 745 to 749 (LQKLL).

This sequence belongs to the peptidase M67A family. MYSM1 subfamily.

It is found in the nucleus. Its function is as follows. Metalloprotease that specifically deubiquitinates monoubiquitinated histone H2A, a specific tag for epigenetic transcriptional repression, thereby acting as a coactivator. Preferentially deubiquitinates monoubiquitinated H2A in hyperacetylated nucleosomes. Deubiquitination of histone H2A leads to facilitate the phosphorylation and dissociation of histone H1 from the nucleosome. Acts as a coactivator by participating in the initiation and elongation steps of androgen receptor (AR)-induced gene activation. This is Histone H2A deubiquitinase MYSM1 (mysm1) from Xenopus laevis (African clawed frog).